The chain runs to 168 residues: Phosphopantetheine adenylyltransferase (168 aa).

Threonine 10 is a binding site for substrate. Residues 10–11 and histidine 18 each bind ATP; that span reads TF. Residues lysine 42, leucine 74, and arginine 88 each coordinate substrate. ATP contacts are provided by residues 89-91, glutamate 99, and 124-130; these read GLR and NSFISST.

It belongs to the bacterial CoaD family. As to quaternary structure, homohexamer. Requires Mg(2+) as cofactor.

It localises to the cytoplasm. It carries out the reaction (R)-4'-phosphopantetheine + ATP + H(+) = 3'-dephospho-CoA + diphosphate. The protein operates within cofactor biosynthesis; coenzyme A biosynthesis; CoA from (R)-pantothenate: step 4/5. Functionally, reversibly transfers an adenylyl group from ATP to 4'-phosphopantetheine, yielding dephospho-CoA (dPCoA) and pyrophosphate. This Shewanella denitrificans (strain OS217 / ATCC BAA-1090 / DSM 15013) protein is Phosphopantetheine adenylyltransferase.